Reading from the N-terminus, the 376-residue chain is MAQKQKCVAMLLAGGKGSRLSALTKNLAKPAVPFGGKYRIIDFTLSNCANSGIETVGILTQYQPLELHNYIGIGNAWDLDRVNGGVTVLPPYAESSGVKWYTGTASAIYQNLNYLSQYEPEYVLILSGDHIYKMDYSKMLDYHIEKEADVSISVIEVPWDEASRFGIMNTNEEMEVVEFEEKPQFPRSNLASMGIYIFNWAILKEYLEMDARNPESSNDFGKDVLPLLLDEGKKLMAYPFEGYWKDVGTVKSLWEANMDLLRDETSLNLNDRNWRIYSVNPNEPPQYIAEKAKVEESLINEGCVIEGDVKHSVLFQGVTVEEGSMVIDSVVMPGAKIGKNVVIERAIVGSEMVIEDGTIIRPEKNVDDVVLIAEGK.

Residues Tyr-101, Gly-166, 181–182, and Ser-192 each bind alpha-D-glucose 1-phosphate; that span reads EK.

The protein belongs to the bacterial/plant glucose-1-phosphate adenylyltransferase family. As to quaternary structure, homotetramer.

The enzyme catalyses alpha-D-glucose 1-phosphate + ATP + H(+) = ADP-alpha-D-glucose + diphosphate. The protein operates within glycan biosynthesis; glycogen biosynthesis. Functionally, involved in the biosynthesis of ADP-glucose, a building block required for the elongation reactions to produce glycogen. Catalyzes the reaction between ATP and alpha-D-glucose 1-phosphate (G1P) to produce pyrophosphate and ADP-Glc. In Bacillus mycoides (strain KBAB4) (Bacillus weihenstephanensis), this protein is Glucose-1-phosphate adenylyltransferase.